Consider the following 232-residue polypeptide: Putative B3 domain-containing protein Os11g0242900 (232 aa).

Positions Met-1–Lys-51 form a DNA-binding region, TF-B3 1. The interval Ser-92–Thr-121 is disordered. Residues Ser-95 to Ser-107 show a composition bias toward basic and acidic residues. A compositionally biased stretch (polar residues) spans Met-108–Thr-121. A DNA-binding region (TF-B3 2) is located at residues Asp-140 to Leu-232.

The protein resides in the nucleus. This chain is Putative B3 domain-containing protein Os11g0242900, found in Oryza sativa subsp. japonica (Rice).